The primary structure comprises 216 residues: MNKQSINIAQIRREYTHKRLRRADLTLEPMELFERWFRQASTAQLLDLTVVSVATVDQTGQPYQRLVLLKHFDAKGMVFYTNLGSRKAQHLAHNARISLHFPWHALERQVMVLGTAKQLALKEVMHYFSSRPRNSQISAWASSQSSLIDTRDTLVSTFLKFNNYFHQGKVPLPSFWGGYRVHIDSMEFWQGGAYRLHDRFIYQRIASGWRIDRLAP.

Residues 12 to 15 (RREY) and lysine 70 each bind substrate. FMN is bound by residues 65–70 (RLVLLK), 80–81 (YT), arginine 86, lysine 87, and glutamine 109. Positions 127, 131, and 135 each coordinate substrate. FMN-binding positions include 144–145 (QS) and tryptophan 189. 195–197 (RLH) is a substrate binding site. Position 199 (arginine 199) interacts with FMN.

Belongs to the pyridoxamine 5'-phosphate oxidase family. In terms of assembly, homodimer. Requires FMN as cofactor.

It catalyses the reaction pyridoxamine 5'-phosphate + O2 + H2O = pyridoxal 5'-phosphate + H2O2 + NH4(+). The enzyme catalyses pyridoxine 5'-phosphate + O2 = pyridoxal 5'-phosphate + H2O2. It functions in the pathway cofactor metabolism; pyridoxal 5'-phosphate salvage; pyridoxal 5'-phosphate from pyridoxamine 5'-phosphate: step 1/1. Its pathway is cofactor metabolism; pyridoxal 5'-phosphate salvage; pyridoxal 5'-phosphate from pyridoxine 5'-phosphate: step 1/1. Functionally, catalyzes the oxidation of either pyridoxine 5'-phosphate (PNP) or pyridoxamine 5'-phosphate (PMP) into pyridoxal 5'-phosphate (PLP). This is Pyridoxine/pyridoxamine 5'-phosphate oxidase from Baumannia cicadellinicola subsp. Homalodisca coagulata.